We begin with the raw amino-acid sequence, 404 residues long: E3 ubiquitin-protein ligase RNF128 (404 aa).

A signal peptide spans 1–31; the sequence is MGALKMRCQCFPLPYLSLLALLLLNLSLTRA. The PA domain occupies 62 to 166; it reads DSPIERAAGL…LKGNEIVDLI (105 aa). A helical membrane pass occupies residues 191 to 211; it reads IFFVSVSFFIVTAATVGYFIF. The RING-type; atypical zinc finger occupies 260 to 301; sequence CAVCIEPYKPSDVVRILTCNHFFHKNCIDPWLLEHRTCPMCK. Residues 336-356 form a disordered region; that stretch reads ITEEENHSETASSGYASVRGG.

In terms of processing, auto-ubiquitinated. As to expression, expressed in the cement gland, cranial placodes, and the pronephros.

Its subcellular location is the endomembrane system. It is found in the cytoplasm. The protein localises to the perinuclear region. The catalysed reaction is S-ubiquitinyl-[E2 ubiquitin-conjugating enzyme]-L-cysteine + [acceptor protein]-L-lysine = [E2 ubiquitin-conjugating enzyme]-L-cysteine + N(6)-ubiquitinyl-[acceptor protein]-L-lysine.. The protein operates within protein modification; protein ubiquitination. Functionally, E3 ubiquitin-protein ligase that catalyzes polyubiquitin chains. Converts epidermis into cement gland and neural tissue in whole embryos. This chain is E3 ubiquitin-protein ligase RNF128 (rnf128), found in Xenopus laevis (African clawed frog).